The primary structure comprises 178 residues: Probable DNA-directed RNA polymerase subunit delta (178 aa).

The HTH HARE-type domain maps to 14-81 (LSMIEVAHAI…GENTWGLRTW (68 aa)). Positions 120–143 (DDDVIDYDSDDPEDEEVEAEDTTS) are enriched in acidic residues. Residues 120 to 178 (DDDVIDYDSDDPEDEEVEAEDTTSDDAPAFEDLSNDDDTDVLPDGIEGQLSELNEDDEN) are disordered.

The protein belongs to the RpoE family. RNAP is composed of a core of 2 alpha, a beta and a beta' subunits. The core is associated with a delta subunit and one of several sigma factors.

Its function is as follows. Participates in both the initiation and recycling phases of transcription. In the presence of the delta subunit, RNAP displays an increased specificity of transcription, a decreased affinity for nucleic acids, and an increased efficiency of RNA synthesis because of enhanced recycling. This is Probable DNA-directed RNA polymerase subunit delta from Pediococcus pentosaceus (strain ATCC 25745 / CCUG 21536 / LMG 10740 / 183-1w).